The primary structure comprises 388 residues: Succinate--CoA ligase [ADP-forming] subunit beta (388 aa).

Positions 9–244 constitute an ATP-grasp domain; it reads KKLFAEYGLP…PSQDDPREAH (236 aa). ATP-binding positions include K46, 53–55, E99, T102, and E107; that span reads GRG. The Mg(2+) site is built by N199 and D213. Substrate contacts are provided by residues N264 and 321–323; that span reads GIV.

It belongs to the succinate/malate CoA ligase beta subunit family. As to quaternary structure, heterotetramer of two alpha and two beta subunits. Requires Mg(2+) as cofactor.

The catalysed reaction is succinate + ATP + CoA = succinyl-CoA + ADP + phosphate. It catalyses the reaction GTP + succinate + CoA = succinyl-CoA + GDP + phosphate. It functions in the pathway carbohydrate metabolism; tricarboxylic acid cycle; succinate from succinyl-CoA (ligase route): step 1/1. In terms of biological role, succinyl-CoA synthetase functions in the citric acid cycle (TCA), coupling the hydrolysis of succinyl-CoA to the synthesis of either ATP or GTP and thus represents the only step of substrate-level phosphorylation in the TCA. The beta subunit provides nucleotide specificity of the enzyme and binds the substrate succinate, while the binding sites for coenzyme A and phosphate are found in the alpha subunit. The chain is Succinate--CoA ligase [ADP-forming] subunit beta from Aeromonas salmonicida (strain A449).